Here is a 256-residue protein sequence, read N- to C-terminus: Hemin import ATP-binding protein HmuV (256 aa).

Positions 2-238 (ISAQNLVYSL…QALTMLYGAD (237 aa)) constitute an ABC transporter domain. Residue 34-41 (GPNGAGKS) participates in ATP binding.

The protein belongs to the ABC transporter superfamily. Heme (hemin) importer (TC 3.A.1.14.5) family. In terms of assembly, the complex is composed of two ATP-binding proteins (HmuV), two transmembrane proteins (HmuU) and a solute-binding protein (HmuT).

Its subcellular location is the cell inner membrane. Functionally, part of the ABC transporter complex HmuTUV involved in hemin import. Responsible for energy coupling to the transport system. This chain is Hemin import ATP-binding protein HmuV, found in Shigella dysenteriae serotype 1 (strain Sd197).